Consider the following 101-residue polypeptide: Trp operon repressor homolog (101 aa).

The DNA-binding element occupies 59–82; sequence QREIQQNLNTSAATITRGSNMLKL.

Belongs to the TrpR family. In terms of assembly, homodimer.

The protein localises to the cytoplasm. Functionally, this protein is an aporepressor. When complexed with L-tryptophan it binds the operator region of the trp operon and prevents the initiation of transcription. This is Trp operon repressor homolog from Mannheimia succiniciproducens (strain KCTC 0769BP / MBEL55E).